A 407-amino-acid chain; its full sequence is Pleckstrin homology-like domain family A member 1 (407 aa).

Basic and acidic residues-rich tracts occupy residues 1-11 (MRRTPAAERLS) and 54-63 (RSAEDGREQP). A disordered region spans residues 1–67 (MRRTPAAERL…DGREQPAHGS (67 aa)). The PH domain maps to 149-184 (SGCKALKEGVLEKRSDGLLQLWKKKCCILTEEGLLL). 2 disordered regions span residues 188-224 (KQVQ…EPPA) and 296-407 (QQHL…SNSA). Composition is skewed to low complexity over residues 189 to 204 (QVQH…QPGQ) and 297 to 319 (QHLV…QPQI). Residues 312-348 (PQPQQPQIQPQPQPQIQPQPQPQPQPQPQPQQQPQPQ) form a 15 X 2 AA repeats of P-Q region. Pro residues predominate over residues 320-344 (QPQPQPQIQPQPQPQPQPQPQPQQQ). Residues 354-381 (PHPHPHLYPHPHPHAHSHPHPHPHPHPH) are 11 X 2 AA repeats of P-H. Positions 354–384 (PHPHPHLYPHPHPHAHSHPHPHPHPHPHQLQ) are enriched in basic residues. Positions 385–395 (HAHQPLHSQPQ) are enriched in low complexity.

In terms of assembly, interacts with RPL14, EIF3S7 and PABPC4.

It is found in the cytoplasm. It localises to the cytoplasmic vesicle. The protein localises to the nucleus. The protein resides in the nucleolus. In terms of biological role, seems to be involved in regulation of apoptosis. May be involved in detachment-mediated programmed cell death. May mediate apoptosis during neuronal development. May be involved in regulation of anti-apoptotic effects of IGF1. May be involved in translational regulation. The chain is Pleckstrin homology-like domain family A member 1 (Phlda1) from Rattus norvegicus (Rat).